The primary structure comprises 10287 residues: MKDLYSLYEDISENDKIIISEKLKNLLNYFQDKNKSYVSEFVVVSRTRFFKSISNYGEFLLLQSSSRVISSYEHILRLLHQAKVYLEFVRCLKLNNCSVIDNEKYEEEISKFINYLESKRKKYYYHICQILIKFIVSSLSDNTIDNKFMEKEFDIEEDNIDGYEKNVNDIEIKNEEYNTSYESQRVKDNNNSNYNNNVNIWTINDNDEKIVMEPFDELEEYGNYLYNVLNQMDNKSWKDKNHAEYLKVISLNDAIIKEDNDKNKNSENNNGLTNTSNITNNMILLPKYLENVRNCIYNHQTKSMLEVKSMIEHAMSDNIKAPLFKTGKIVSEMLPSPNYEKYWSTTQPEFSNKIDTSLVQNMIFKFFNLQKNTTPVDNMTPTNYNIKFYDIFKIILKGIYSIKCENEETHIFLNQLLNKTKKKKYPFNYNNQLLDKNVKTDDLYNYLLLPLHLYNNTHEICEGILKYTIYNNDLVLTLKIVDTFLTISVYENSLKDLVHLLNTLAECIILPYLRTEIKENIKHDTGDKDIYRTGTLCKNFETELTNEFNKISDDNNNNNNIGIIDTNKSRDNINQNTNTNNNNNNNNNNDGDRFDDDQFFDNFSNLHKLICKIPLHEYESLKLLELFSLQYPMFLKIQNKPQRCLKDISKPCEYYSNTLPIYGSYIFQIVVSFEIDNSIKVLDELGSKCKICFQLTNDNMNDENSTDITVSDDNSNIPNKEYNFLEINFQQNHMYTKYNKSSVKEEDEIEKSMKAKSSTKSNDETNKANNNKNNNNNNKNNNNNNKNNNNNNKNNNNNNKNSNNNNNNNNDTFEEYEKNNKKKKKNVQVNKLINVYDITNMNTIVFDILIDQGCFSSETNVNNVTNDNGKIVIYSNGRHLLTSNINKKIIGFNEKKGLTNNNIKLKVFTSRTCSFEFPKECYWSSAFVQELVNRKLIPETNQNFLLKNPINIIELYNKVSIALNRYLYRFCEWNNGDYKRIIENDSCYTLYNNIDINTFEALIKYTENNNKILKKLYTLSKNCALDKENYMENNKHNINYYFSLSPVKYHVRKYREYIYEWNQTSDSQICALSILKLYLKNNLDVNDGRIEHNEKFYCLSERLIKSFLKIIKLKTPFINREDFYVNNNYEMEELDLDGSLWLLRRNVFQILLDADKIIMSNIFMRINIETILNLLKFFSDNNSLDSDMILKLLKSLEEKGILEIMMKRMLSTPCKDGTQYNNSNYNDNSHYTHNSLKSQNISSSTYSSSSSSSNLYNTNAENFNDIYTNNNGEEKRKKRKYYEENMHEIQRYEKRKRNNKSRIIDTTHFGVFVEELMTLIEHQTNNAINTPVVNHIEESDVFMENKACDVIHKLCSFYNDEIKSEVFLRNYNHFNLCIKILNEIKKKNNHVSSASEVASIFLRGVVLMLTTYILTIATEYESTKTFLYKPVIPFYNLHNEMLKKKKDIHVYHGEEIKQMISMNSKSMKDRYNNQFNQYGSNNKSSNLTNQNIDILKCDMEDVSSCNSRYSSFINQNWELEYNKKIKKNNSISNNEYNKKGDVESRDHANSWIPLISNQNDGSIDGVIIHSDDSSSQSFLVSKRKVYTFGRKSFESVNMYVDDNEEDEGEEDKSEDYEYCDDEQQNDVYEDTEEESDNYHMRKERRVHQKKKNSKVSINKKTNNSLSDDNNYSSDELEEFYLRKNLLDLCDNNNNNNNNDEPNNFKSQLNEILYKLSKKKKYARNSKKLKLLKKKIIKYKNVSKKLNFIFSLLEEILKIMLSVGLRVLSSISYHYLYEKNGIYKFINIFGSNIIRSNLRDKGSFLELCENMIKPKCLTLLQACTFIISGIIPCLGYVTTLFVDKKANKYFYIKELNNYLSLKMALNIWPMFLKITLQGLLTSRHLSSEMSVHKDNLHPIAECCISITSLATHFLTLFTIMIDNLSRYEIYFNLKKGMNTLGNNYPIPLILINSAKYIRIESKKNKYYDIEKAIRTILLQLTDCSVCDYENYVFNHYMVPQSISSFLYATRMNNDSNLENEHSSNNINAHETDYHDISINKNKALGNEMVKTYQSMYEDDYEQERIGIRSRSRRGIPLKKKSERNNSKEENVNNMDHNNNNNSNSNNNNFFHRGSYSTNPRNNNITCDRKNMEFLKKLMKNDHDAVQCLGKAYSVFHKNFERAQIAFVAVFLHLTGYKHGQIKGPHQNYNSAKNNNDNKNDHIIIEDSLENKKIKIACNLARQGVIDLISKSQASQYHKKSIEEYNTSSKNKKCKEEIQEQMSMEHFEGNNKRMNNVKSGSHNDFKNLVRESHQNINEIDPDDNNKSNVYSSIEQVNDLPLNKKKSPILHLSSDLDEKNDLNFCNFSKEELNYVNDVHPNGEKSSHNNKSNEFLAMDSIQKKREKQIEKILQKCEWIINTYPFGLCPVSVKENISQEWDEHFVFMRRNSYDIPITVRKMYSDRSNYQMLHEVATMPAVAVEPSVSSLSYLDQLFSHQNKINDDKLECIQFSTENIFGKSTTKNLFLLKKLLKTYKRNVCIREPSNQLDTNKYDKICLENNKQFHTYICNNKNVNFSNSCASCDSGEGNYYNDESNYYMNFHFSEKNNDHLSNNSLVLKYNNLCKTNNLEKFGELWLNARSTKNYVYHNDQDVQHIDEFNSNLMNYKPECFLFSLKSVDENDYIMRNENMNNVKWDPTGSHITKYTNSMFDYYDNASDMNLSELHGKFNAFYKPQKIIRSMNKQEFLPALYQEEMLRNQPYHTTANNNTTNIINTTKKKSFPSFDYFRNKYLPNNSIDFTINNAVDHTIDSKDMLQLKEILKFIMNDTDLETVLNIIRIEQLTSLCRYLISRSLKSMLCAGIFGGIKNPIVNMSKKNLSSNKRSQKGYNSNSDDIKKKKKSNCNENEGSLDKYNDKEKKNDKINNGDTKNSDDGKIDMDDKKYYNDDLKNSDYSKNNESNYLSLSKEPDDMLLPSPNYEKGISTCVKKNRFSVLSEAYKEENLLVNQRKYKNLDLNQKIFKNDKRKKGIFEQWRQKSTKSMQWPVILDLLVPSFSRGSYNECNRMISNMESSLFSVQNYGWMLLKLLHIIIIKFRSLTPLKTIMREIDEKNRNSNNNNNNNNTNNSNNSNNNNNINSHYMNQWNGSNIKDPFEYHYWFTQPMEYALSFTLTDITKSICIWYLRYNRKLIMNSSSFSEIIKNSMNTLWIESVLRLIALQICLGVKPLNDSRYVVPFLYHMFTICQPLLREVHISGDYLKKKLLVGNKILYYSNKNNSFLQVKCSYCHKSVCMSSRKMSSKMSPMETPLKSIRKGNSSEVSSKISYLNGHTYSNNDNRDNYDDDNCDNYDNYDNDNENDNCDNSKNDRGVKGYIHSERVQKKQKKIKHKIIKMKMYNLSEQEHEEILDNVITGIIIYHQTLQNNNQHINKMIILQNLKGFKIKEEYYTNENHYWALCVQQYKNSPLYTLPLKNLNKCIKHNNRNIFQTTKMNESDDTSCYYWSVSGDPVYNIYGNAKSISDVQLEICAHKKYDSNVRSYLKKNNFELEFSINTHMNDVVNIWIKRKSIIINKELIEITDHHSIPLFSKGKQKKEMQENEDEKIKNKGKNKTKTNDDKKKNSSINNNNDCYDINYKYDTYNHEENDGSHKEENKKYSNENENVEYLSEHFCDCMKVYTDQDYSNEDYSNDYNYNCDNYKNMYSDDKKNRDLYDHGDNNLNYKKLKLISWNLIQTILWGILVSGENVQMENSDQVISESTTKYIKKKICNIQDEIDVNGNNHNDYKDYKYAFYKLQRKSLIESVLKMIMSVLIKLCNIVKLYNDLTKNKKGSFYICINNTKISMKQVKDCERMITDFMYALIKCVQNSSTAAVTLLRCFLFGQDNPTYRFRKLNKIQINCKFYRLITECIKKAPSDADDISIFFNTYLDKKKTLMNNDNDKINTKTTKKTKKEKTTKCYKNEMYDEKATMENNKKNNMGDLKWNEGEAPAHPSKDKSKHYNDNNNNNNDDNNSNNNNDYNNKDHINYPDDYVYNNRCIKYKGMDLKMSNFFFKYYDTNMKKNYNESKIHGFFLLRCLPPIKMFPKQLVIQETQKLFQNENNFLFNSKKDGSSNNDKNDNSNKNRNNYNNNDDNNNNDDNNNNNDDNDDNDNINNNYNNNNNNNNRNNSNSNNSNNSDNNNINYYYNNTDYQIGEHNNMQIHSSSKENTLYPDDHQNVDISTTTNEGNSQCNSINNILGLIPRISYRNHPFDDLPQSEFFMSSRPSDDFEAHMEGRVLRVLRGLNLGGVVLCLAPLTFPALHVGPNEVNDIINFRIQTRGRFGVTVAPAECVLSNVSEVFDRNDVVGFRTNMCPPFRHDVFAANVQYELGDLLSVKFNVEDQQNQKCLRTELMVSGVSIGSVLEVLFEADSQIEFERRMNLIFIFQDPLTIVYEGPTFTMQYVDPNKNNANNFRNDKKNADEEFLNELYSLSGYDKKNFKKELRKIRMKKNEFYESVKLYQSILESDNEILKDLKHEVIIRMNTSLTNIVSYFKHLSSNGVIFNSENDYYYWNDTDDTLLRKITTKKKKKHLYNMNCNNKMNEKYELISLDTLLSNDEKKKKMNNMNILNNPNFKTKGGKKKKKINIHLSNDKEEDKDEEAKYVEGIKQEKHTYYDYSNNSLLYNENKDNSVDNYYSFGNKEDGNRDIFSYSEEKHYNIITYDNSQITSSDKNNDPNREKILEKKNFQDDSIMSNRQSDNKEEGTSFNLYADSSIYVNMNKKYKSHVDIHKTIREVLSIICVLGLNINGEPKENKQEKFSNDTNYIFDELPWLTSLSDLKNSVTYNLDRKCLELFFCNLVDIICMDVFLGSILNFVTHNINENNQRCTRDKHNIVSFKHNKNYKKVIQKTSELDSECYPNEEYNDEFFENRKGSPYFPSRSKNGNINSDRRKNYNIQNSDNSNIGDSELNVNVNDNDNSSCGSNSKDSLNVHARNVGTDINSSSESGNTNSNNENSLRNSIFMEENETIESYRNKTKRSLSKDKNAGDLSNDNTEEIYHNNRYKKEKNKDEKNKIKKNKSYKNKTHKNKKQKNKSSNADKMNKNSLYGYTLCLIGTKSIMCCCIILRTLLEMNSDGYYEPNEKMYASCKRLLNFIKLFFFIDIGISDVLIKYFAEKNKMMDMNFLFDKRKQTQNGNNNSEICSTSSFLNSFVKNTNGNNKKKNNNHNDNHMDCMNWKEEVVFYNQKYHDNMHTKDLLNNKEDNQSSYISTNGKNKDTKDAVQNEYINILEIVNYCGIPNNFLEYFDISTPTIKNQQVIAQNDSFDLWIYIMNLLICFNSQNKYSLSFPQSINQLSENSIKNTLFDLEYSKFYFSNKILRKSVKFYASWLLKKYIIDMTCVMASLVPKLFIDELKTNLMKINEGVRSGEEIENMRNVQNKYTNSQDSVNYSSANTKEMNHKTIVPKCCFENEKTKLDHVVNNKEGHQMGFDSFNDKKDGLHNIHHAKSCEEKNNTKSNSYNNYNNYDNYNNINKYSCYNDKEEYQHELLCINNDYTHHNKTQGNFNDKLMHAKKKYNSKYRKVNKVEHIGQLLNAHLRNKEEILNIFSIMYLFRICIYYLGRSKDFRKEDYWQNFQGQLRNAKIKENVYKLLNEKSCKSSLLFGWQRIFYQCVVSWDDEKLVDQLLIIIQSELLYHLIGSVAQSMSQKRVKVEQFYAISPSVHVAHWMIDTFVRHPLCPSKIRSCCITPMTVTSLFGLIMNGNRLPIFLGIDVCRLVYWCCVVYILQNNQMHKHYKKLNNIDILTQLNITMEEPLNNDLEYTTCANQKKMITKNYHNTKSNKQHNNYFSTRGKMQKVKCNYYSFLSYVFHCVNICGSSVINQIISFNNNDVGYKNNVNKNKGNDNVSNNNNNNNNNININSSSNNNNNNSSSNNNNNNSSNNNNNSSNNNNNSSSSNNNNVRNSNNEHVNNIIDNLNNNINDILNCIQNSSNNRVLNNHFSGISSVSNETIYNLNITNRRNSHNISSNNINNTNTLQENTETNNTSNVNNLGGINSLYVNGTNGNLKTDKILLHNFSNFDLMENKEPSMYNSMKMNASLLVHYFACAAYYIKRADVYNIMNYYNEHTHANFKQYCLYLYVVDHVSKIYSKHIKRKINLKKKGGKKDDQLMTSSFFSDLMKKDPNEKSHMCYDDYTNNKYDNNNNKNNLVNNENELIVRKDSKISSKNYSFNSDYKHADKTKCRKHTYDESYKGQYPELFVDDVLHIPKKLSANIIINMNEKIHHISSSNSNTIKIKIRDMFVLPKQNDKSFIHKGIFSTHHNKPFYDKEDKYMFGEKNIVEHKNKQKQLYADHSNHQNKKHFTYNENKDKFNDKSNCNLKQKINRLNSEENERIEKINQKNFKHPNIIFSADNSFNYILHEIKFKKIQEFVYLNSNVIDEKVDLDTIEKITLGSYIELTDIYNLPGSFFLIGNSELYSGSSNLCSSSFTISLILVDNNADNMSDGNFNNFPNIEIGVINRKKYFEIKLEEDQNEDEDKIEIEIEEEKENENEKEVEKDENVHDEKDKVEQIEHEKKKEKDDKEAWLLHYDDGKDTNVKVKKFSNCRISKNEEDNIAYRLRNKELLGEKNITSKNSKFLYDKNVVDESLKCTRKNEDEYEGTEKRHSSNIPTDINKIAHVSLTKYINNEKIEKSKTRGGKRVQNVVEKLRNTLNDNNIKEDILNENHNKNNININSNINSNNNMMRGKMFHENLCDINMKNLGSNFYHSKYADLNKTNYITLNISDGNVNSKGFDCTDNNIENMKELLTNKMSGILNITVQIVGKKILWFANNILIFCKDFSYEMKEFLPFLKVSPIESKKIPKNNGSNKPSVHMKFTEMNEKTFVSPLSNFYFKFENMHKLKYENDCINTNKLWSKCLWKPVFFILPDVNNNSDNNVDVPGTSTHDLVSTKMNTHVNVNNNNMANNTNDTNYLNHSIIKKKMVPSIIPQSSNEIVIKYNKYHNTYGHIEYEDQFANTLFVSPNIQIKSEPINITYYMYCKNLQGKKCKLLCMENIKNIRTISIKNYYGFINLCNQYKHNEKPTSSSMEQKNSNNNVSYSHHNMYQVQQKPYSKIFDTRKNVESENSNNKADSILKQHLNRIINKSEDLRINNKGTLDICNKLLLSNECKTNEKKKKTGSNNIGSNTNIHELSDNNRGQHTSYYHEQLLSESLSKNVIHSNYINDYFTLNNDNKNNTSSSSNNNNNNKNNNNNNDNNNDNDNICSNSNNNVHIKYKLNQIPKIRKHIHHNIKYSSIQEINDNSHYSNKNIIEEKKQKENSNDMHNPKKNEGHYYIADPSNEKEILYDNKNNENGYSNNFLDDNNALHKHVHNKITLKGSNTYYDMDKIKDKQIEYFSNDSSNYSLYYIGCKEFKLCIDSYDSIFPAKPFIFNCTVNFKEEENYYHKKNYLTNSVGIIWGIYRWLWKSNGKFICPLRLPLCVSEFPSEKIEECEIDVVGYKSNDNLCIEFQPLYQCLLFYKNGTYQFGFKFDTFYNYRNLKNTFLSEHNGDMNMDRVHQNISKLSYSSSISNANFNDNFFVKRFVHNKYEQVSTEKNDLQKMSKKKDDKINNYDDNMMNNYDDGNNNNNNNDSMNNHKDDMNNYNDNINNYVESMNNYDDIMNKGHVVTQNNLTLNSEHNTKVNISNFFPLSNMSSVSNMYTISNERKSSNKGNGTNNVVKARVERRGKYKGMNGININNDNDRDEDNNKDKDDGNHDNVNNINSFYNKDRMISYDNLKQEKQNDTVMRIKNHVNMIKLYNCLLLNDCENVSSILINNPELLTKSNENMSEISFEHYYQMNSDDFPYELISSMKNIMHEKYLTPLMLACRIGCEECVQNIIEKGKVNPNKSCHRIEKETPLMVAAQYGHSRIVCMLICVYGVQVNKKDIKGNTALHKILLNYSNTEGKKNSTIKIVQLLLKLGADLTIKNKKGISVEDLVQKKLIKNEKIENLLNIWITLIIKNKKKHEGRYIPRNIIPGLLSNCSIVVGFPKGINGNVPNECGVKINSFVVGGEELVNVRYHKEKPTKHTFDNNYDNNYDNNYDNNYDQDGGNNIYNNAHSNVYNNGDYKNNLNKDDHPCYINFNYDKLNYNYNKWRVRTKEEEYYSCDNSSSNSSISKFGNLEKKIIEDHEKYKFSKYGGYPNGLCYKGEKNTHYNKGFEGMNSLEFDAFSGCKNMYEDTYDKENEEKLLYNNIKDNGLKEIDQEINHSNDNIKAFLKDDDEKDDDEYQKPYDKKVINKNKNDNYDKNDNYDKKDNYDTNDKNDKNNCDDNIILSGGKKDKRNKKVMNTNSSGRRTISKNSPNLSSAKNIKCSKTSTYNSEKYNSNERNSNLENHAIPIDHKDSVDETFVFIEKQKRNNKINTNDSMTYNPVTHEKENILNYILVHTYIDGKLGIRSASNHDMETEHGMDNIFETENKKNKALNSNMSNNNNNNNNSNNNNNNNSNNNNNNYNNNYNNNNNNCIYQEFYMLRKDKKKRKHLILSNLQNNLFNYHDLKYSLIEFINKSGVFSDIIKGHSYLDSKKKIPKFDELKNSLIEANNELDIIKGFKKFLELFDFLYMDDRLKYFLNIDLRKNLENSRNIVDLGYILLKIDSFCCIFNSFKLQWKDNSHEEWKKKLLKGIGILNEFSDIKWITDSYTIFKYEEEILESASFIDKILQNGNYMVFYNNLMNMIHDKNIHLKNGLYDSHIFNDMLKNINIEHFNRDTILYDICSKQNILKNYFIQERNKKYAMNNHDSRVINEKYKNYMNEYFVNKKLKGHSNNKDLYLSMNDSEDELIYSKEKKYKKHQTCDKYIYKSEMKEEMYNKSNELYNNSLNNSNNINNHSEFYNNGVNRKGDHTYANEKDLSMTSLDCKNHMYGEPQPKDKTYKKGMYDEERKQSMFNTSENTEQHDLINKVSGKEEDVRKPKQRNIRSKRLEDIIDKMYEDNDISNRENSKKNIDGLNNISGNGRIKFPSYSKNLLRYRNGNFLLNYSNNIFEKGREDESLNSHSPRVTSNLLASYSNERHGIKLAFMNSGEQGKVMKHTYNDNVSNNVSNNNNIQGEYNHKGDVPHNKFIEKNHYTKNGTNILSSLNKHNHLNTQEENNSLENNYSCETFCDEYDSEESEFELICEVHFTSKPNEEIMTREQFNKMWPQTLDMYILHIYDLISSYMDSPEKISLFIYHAFDMEKIKKKLPSKSSQLWKRINMSLDDFIEEIKNVHNYTMRIIYQSNYKRYGMLPPNFKKYFTLSEECLKNIAKNKIIMNMDYYKNYIYEENKKMFLKIIQDRIYLLNKFNIYFENCLPITSILFNKPVINLEEQGLRTLECPLCFFMSNDSYFPWTYKKRNTHLFQYNNNNNLCLVQKMRSELYDNNNLMSKNVSMLSLYNNTNYSNNDNNSIVGQSNYPIKVEGNHINENYKNCAEHNHYDYSLNKNYSNEKSIYVKNSKQIDDIKKIKSGNEYIIMDSIQSLDKNSTIVKKGSFFLNNGKGSYNSYTEIEDKDWLLGNVENLNNHNIYPDNEINYKNNNHEDNNYNCYQNHLCGNESEEENEIFDCEKYCKNMYTSNKMVLAMGSSDLPIQLSSYLFIKKLLKHDTCLKLWKECLKYITSSSSEKSNLTLRIDRGMAATAKHIAHTMWYQSTYSLLNIDTDKLRGKPRDRPFMVVFVGEGATDFGGPFHEYLSSISREVMGKLSDSPDKSLPVFPLCIPCPNYTQAIGARQDTVIINPQSTPYVVKEWDYIGEVDVIDNLESFRWQILNIYNSIKDIKKKLQKTAKDSYEDYKQKMEENGSDDGLENIMPVKGKSKTKGKYKKKNKSNKMNMGSDNILKDGVHKDNNNQKGHKYDEKNICNDKNIQEMTSKEKMYFYTSKKSVTFEKLEENEKMDYQIENKYDYPFVCDACEYDSDIYEIINNASLKSRKLFMNKIWKKKKCLDDEGDKNVLLRDPHENENMRDDIRNNMNNNNNNNNNNNNNNNNNNNNNNNNNNNNNNNNNNNNLNSIGGSKNTMTDGKKKNKFIIDYDEKTIKAMELAMYESLGRVMGMCVCIASALNICFNPIIWKKICGVPLELQDLADYDFVAVEMLKTLKMLNSEKSNEWNMELKQSLGDMTFITEDSGGNSIELIKNGMNIPINFDNLGLFIRLMTKCKMNESSKGIRHLLKGFSSVIPLGRLRLLYDFKDVEHMVCGEREINIEVLKAHTWSNDLNIKDKLFTVLEEFTNEQLQSFLRFVSGRSRLPTTKNDWYMIIDVENPNKNISQIDQRLPTAVTCGFRLLLPQYSSLDILKERLLYAIKNCTAIDLDAYVVHDQMQLMYGE.

The TPR 1 repeat unit spans residues 47-82 (TRFFKSISNYGEFLLLQSSSRVISSYEHILRLLHQA). A compositionally biased stretch (low complexity) spans 566–589 (TNKSRDNINQNTNTNNNNNNNNNN). The segment at 566 to 592 (TNKSRDNINQNTNTNNNNNNNNNNDGD) is disordered. Residues 631–665 (YPMFLKIQNKPQRCLKDISKPCEYYSNTLPIYGSY) form a TPR 2 repeat. 3 disordered regions span residues 740–823 (KSSV…NKKK), 1221–1251 (NNSN…SSSS), and 1599–1670 (YVDD…DDNN). Composition is skewed to low complexity over residues 767–810 (KANN…NNNN), 1221–1235 (NNSN…THNS), and 1242–1251 (SSSTYSSSSS). The segment covering 1601–1635 (DDNEEDEGEEDKSEDYEYCDDEQQNDVYEDTEEES) has biased composition (acidic residues). Over residues 1641–1653 (RKERRVHQKKKNS) the composition is skewed to basic residues. Residues 1654 to 1670 (KVSINKKTNNSLSDDNN) show a composition bias toward low complexity. The next 3 membrane-spanning stretches (helical) occupy residues 1821–1841 (ACTF…TLFV), 1860–1880 (LKMA…GLLT), and 1900–1920 (ECCI…TIMI). Basic residues predominate over residues 2070–2080 (SRRGIPLKKKS). A disordered region spans residues 2070-2112 (SRRGIPLKKKSERNNSKEENVNNMDHNNNNNSNSNNNNFFHRG). A compositionally biased stretch (low complexity) spans 2090–2107 (VNNMDHNNNNNSNSNNNN). One copy of the ANK 1 repeat lies at 2116–2145 (TNPRNNNITCDRKNMEFLKKLMKNDHDAVQ). Residues 2141 to 2175 (HDAVQCLGKAYSVFHKNFERAQIAFVAVFLHLTGY) form a TPR 3 repeat. The span at 2854 to 2865 (NLSSNKRSQKGY) shows a compositional bias: polar residues. 9 disordered regions span residues 2854 to 2945 (NLSS…SKEP), 3087 to 3113 (KNRN…NNIN), 3303 to 3344 (NGHT…NDRG), 3561 to 3599 (FSKG…SSIN), 3942 to 3998 (TMEN…KDHI), 4076 to 4157 (LFNS…INYY), 4695 to 4716 (EKKN…KEEG), 4886 to 4972 (SPYF…LRNS), and 4984 to 5051 (YRNK…SNAD). Residues 2886–2929 (SLDKYNDKEKKNDKINNGDTKNSDDGKIDMDDKKYYNDDLKNSD) are compositionally biased toward basic and acidic residues. The span at 3090-3113 (NSNNNNNNNNTNNSNNSNNNNNIN) shows a compositional bias: low complexity. The segment covering 3316 to 3335 (YDDDNCDNYDNYDNDNENDN) has biased composition (acidic residues). Composition is skewed to basic and acidic residues over residues 3567 to 3579 (KKEM…EKIK) and 3965 to 3974 (PSKDKSKHYN). Residues 3975-3992 (DNNNNNNDDNNSNNNNDY) show a composition bias toward low complexity. The segment covering 4079–4094 (SKKDGSSNNDKNDNSN) has biased composition (basic and acidic residues). Low complexity-rich tracts occupy residues 4095–4116 (KNRN…NNNN) and 4124–4157 (NINN…INYY). A compositionally biased stretch (polar residues) spans 4906–4917 (YNIQNSDNSNIG). Low complexity-rich tracts occupy residues 4918 to 4942 (DSEL…DSLN) and 4953 to 4972 (NSSS…LRNS). Residues 5026–5045 (KIKKNKSYKNKTHKNKKQKN) show a composition bias toward basic residues. Helical transmembrane passes span 5058–5078 (LYGY…CIIL), 5106–5126 (FIKL…KYFA), 5552–5572 (EEIL…YYLG), 5716–5736 (LPIF…VVYI), and 5815–5835 (FLSY…NQII). Residues 5848-5917 (VNKNKGNDNV…NNNNVRNSNN (70 aa)) are disordered. An ANK 2 repeat occupies 6004 to 6032 (GINSLYVNGTNGNLKTDKILLHNFSNFDL). One copy of the TPR 4 repeat lies at 6051–6084 (LVHYFACAAYYIKRADVYNIMNYYNEHTHANFKQ). 3 disordered regions span residues 6495-6527 (EEEK…HEKK), 7123-7147 (EKKK…DNNR), and 7183-7217 (NKNN…CSNS). Residues 6501 to 6527 (ENEKEVEKDENVHDEKDKVEQIEHEKK) are compositionally biased toward basic and acidic residues. The span at 7129–7147 (GSNNIGSNTNIHELSDNNR) shows a compositional bias: polar residues. 2 TPR repeats span residues 7347–7380 (SNDS…KPFI) and 7577–7610 (NNNN…YDDI). Low complexity predominate over residues 7571 to 7583 (DDGNNNNNNNDSM). Disordered regions lie at residues 7571-7590 (DDGN…KDDM) and 7653-7712 (SNER…VNNI). Residues 7696–7706 (DNNKDKDDGNH) are compositionally biased toward basic and acidic residues. 3 ANK repeats span residues 7809 to 7839 (KYLT…NPNK), 7845 to 7875 (EKET…QVNK), and 7880 to 7917 (GNTA…DLTI). Disordered stretches follow at residues 8208 to 8300 (LKDD…SAKN) and 8413 to 8448 (ALNS…NNYN). Over residues 8219–8259 (YQKPYDKKVINKNKNDNYDKNDNYDKKDNYDTNDKNDKNNC) the composition is skewed to basic and acidic residues. Residues 8277 to 8300 (VMNTNSSGRRTISKNSPNLSSAKN) are compositionally biased toward polar residues. A compositionally biased stretch (low complexity) spans 8415–8448 (NSNMSNNNNNNNNSNNNNNNNSNNNNNNYNNNYN). TPR repeat units follow at residues 8782–8815 (QTCD…SNNI) and 9550–9584 (DLPI…ITSS). 2 disordered regions span residues 9795-9818 (MGSD…HKYD) and 9913-9979 (NVLL…SKNT). Basic and acidic residues-rich tracts occupy residues 9800 to 9818 (ILKD…HKYD) and 9913 to 9930 (NVLL…DDIR). A compositionally biased stretch (low complexity) spans 9931–9971 (NNMNNNNNNNNNNNNNNNNNNNNNNNNNNNNNNNNNNNNLN). In terms of domain architecture, HECT spans 9938–10273 (NNNNNNNNNN…IKNCTAIDLD (336 aa)). C10241 serves as the catalytic Glycyl thioester intermediate.

It is found in the membrane. It carries out the reaction S-ubiquitinyl-[E2 ubiquitin-conjugating enzyme]-L-cysteine + [acceptor protein]-L-lysine = [E2 ubiquitin-conjugating enzyme]-L-cysteine + N(6)-ubiquitinyl-[acceptor protein]-L-lysine.. Its pathway is protein modification; protein ubiquitination. Functionally, putative E3 ubiquitin-protein ligase. The sequence is that of Putative E3 ubiquitin-protein ligase protein PFF1365c from Plasmodium falciparum (isolate 3D7).